Reading from the N-terminus, the 1033-residue chain is Isoleucine--tRNA ligase (1033 aa).

The 'HIGH' region motif lies at 47–57; that stretch reads PTANGLPHVGH. The 'KMSKS' region motif lies at 590-594; the sequence is KMSKS. K593 lines the ATP pocket.

It belongs to the class-I aminoacyl-tRNA synthetase family. IleS type 2 subfamily. In terms of assembly, monomer. Zn(2+) serves as cofactor.

It localises to the cytoplasm. It carries out the reaction tRNA(Ile) + L-isoleucine + ATP = L-isoleucyl-tRNA(Ile) + AMP + diphosphate. Its function is as follows. Catalyzes the attachment of isoleucine to tRNA(Ile). As IleRS can inadvertently accommodate and process structurally similar amino acids such as valine, to avoid such errors it has two additional distinct tRNA(Ile)-dependent editing activities. One activity is designated as 'pretransfer' editing and involves the hydrolysis of activated Val-AMP. The other activity is designated 'posttransfer' editing and involves deacylation of mischarged Val-tRNA(Ile). This is Isoleucine--tRNA ligase from Bacillus thuringiensis (strain Al Hakam).